Here is a 428-residue protein sequence, read N- to C-terminus: MAENGDKEQKLDSDTKICEQIEYYFGDHNLPRDKFLKQQILLDDGWVPLETMIKFNRLSKLTTDFNTILQALKKSKTELLEINEEKCKIRRSPAKPLPELNDEYKNSLKHKSVYIKGFPTSAILDDVKEWLKDKGPIENIQMRRTLQREFKGSIFIIFNTDDDAKKFLENRNLKYKDNDMTVLSREEYHAKKNEERKLNKSEEKAKSKQVKKEAQKQAEDAERKLVEERVGSLLKFSGDLDNMTSREDLHALFQTHGDIEWIDFSRGAKEGIVLFKMNAKEALDKAKAANSDNLKLKGKDVKWELIEGDTEKEALKKILEGKQESFNKRKGRDGRKFKGKGRGGKGNDSSSRKRTQFQGKKKTFDSSDDEDDMEESESPQKASVKAEESAGTKNGAAAAPGSPKKRSLDDKAEDGPAVKQSKTEVGDQ.

Residues 7–99 form the HTH La-type RNA-binding domain; the sequence is KEQKLDSDTK…RRSPAKPLPE (93 aa). Positions 111-203 constitute an RRM domain; sequence KSVYIKGFPT…EERKLNKSEE (93 aa). 2 disordered regions span residues 187–223 and 323–428; these read EYHA…DAER and QESF…VGDQ. 2 consecutive short sequence motifs (nuclear localization signal) follow at residues 196–212 and 316–332; these read RKLN…QVKK and KKIL…RKGR. The 123-residue stretch at 227 to 349 folds into the xRRM domain; it reads EERVGSLLKF…KGRGGKGNDS (123 aa). Composition is skewed to basic residues over residues 328-343 and 352-361; these read KRKG…KGRG and RKRTQFQGKK. The span at 366-377 shows a compositional bias: acidic residues; it reads SSDDEDDMEESE. Residues 406-428 show a composition bias toward basic and acidic residues; it reads RSLDDKAEDGPAVKQSKTEVGDQ.

Post-translationally, phosphorylated.

The protein resides in the nucleus. In terms of biological role, la protein plays a role in the transcription of RNA polymerase III. It is most probably a transcription termination factor. Binds to the 3' termini of virtually all nascent polymerase III transcripts. The protein is Lupus La protein homolog A (ssb-a) of Xenopus laevis (African clawed frog).